We begin with the raw amino-acid sequence, 506 residues long: 5-OH-xanthotoxin synthase (506 aa).

A helical membrane pass occupies residues 3–23 (PVVIFLVLAFPIASVYLLFYH). A substrate specificity region spans residues 365–370 (TGPLLI). C446 contributes to the heme binding site.

It belongs to the cytochrome P450 family. Requires heme as cofactor.

The protein localises to the microsome membrane. It carries out the reaction xanthotoxin + reduced [NADPH--hemoprotein reductase] + O2 = 5-hydroxyxanthotoxin + oxidized [NADPH--hemoprotein reductase] + H2O + 2 H(+). It participates in secondary metabolite biosynthesis. Involved in the biosynthesis of coumarins and furanocoumarins (FCs), natural products required for defense responses against attacks by predators with potential medical and agroindustrial usages such as anticoagulant, rodenticide and artificial vanilla substitutes. Catalyzes the conversion of xanthotoxin into 5-hydroxyxanthotoxin. This chain is 5-OH-xanthotoxin synthase, found in Pastinaca sativa (Wild parsnip).